Here is a 459-residue protein sequence, read N- to C-terminus: Methylenetetrahydrofolate--tRNA-(uracil-5-)-methyltransferase TrmFO (459 aa).

Residue 15-20 (GAGLAG) coordinates FAD.

This sequence belongs to the MnmG family. TrmFO subfamily. It depends on FAD as a cofactor.

The protein localises to the cytoplasm. It catalyses the reaction uridine(54) in tRNA + (6R)-5,10-methylene-5,6,7,8-tetrahydrofolate + NADH + H(+) = 5-methyluridine(54) in tRNA + (6S)-5,6,7,8-tetrahydrofolate + NAD(+). The enzyme catalyses uridine(54) in tRNA + (6R)-5,10-methylene-5,6,7,8-tetrahydrofolate + NADPH + H(+) = 5-methyluridine(54) in tRNA + (6S)-5,6,7,8-tetrahydrofolate + NADP(+). Functionally, catalyzes the folate-dependent formation of 5-methyl-uridine at position 54 (M-5-U54) in all tRNAs. This is Methylenetetrahydrofolate--tRNA-(uracil-5-)-methyltransferase TrmFO from Syntrophotalea carbinolica (strain DSM 2380 / NBRC 103641 / GraBd1) (Pelobacter carbinolicus).